Consider the following 220-residue polypeptide: StAR-related lipid transfer protein 6 (220 aa).

An START domain is found at 1–208 (MDFKAIAQQT…AKDGIKAHRT (208 aa)).

Functionally, may be involved in the intracellular transport of sterols or other lipids. May bind cholesterol or other sterols. This Homo sapiens (Human) protein is StAR-related lipid transfer protein 6 (STARD6).